The following is a 472-amino-acid chain: Methanethiol oxidase (472 aa).

This sequence belongs to the selenium-binding protein family.

It is found in the nucleus. Its subcellular location is the cytoplasm. It localises to the cytosol. The protein localises to the membrane. It carries out the reaction methanethiol + O2 + H2O = hydrogen sulfide + formaldehyde + H2O2 + H(+). Its pathway is organosulfur degradation. Its function is as follows. Catalyzes the oxidation of methanethiol, an organosulfur compound known to be produced in substantial amounts by gut bacteria. Selenium-binding protein which may be involved in the sensing of reactive xenobiotics in the cytoplasm. May be involved in intra-Golgi protein transport. The protein is Methanethiol oxidase (selenbp1) of Xenopus tropicalis (Western clawed frog).